The primary structure comprises 207 residues: Large ribosomal subunit protein uL4 (207 aa).

Residues 50–76 are disordered; it reads KTKTVSEVSGTTKKPFKQKGTGNARQG.

This sequence belongs to the universal ribosomal protein uL4 family. In terms of assembly, part of the 50S ribosomal subunit.

Its function is as follows. One of the primary rRNA binding proteins, this protein initially binds near the 5'-end of the 23S rRNA. It is important during the early stages of 50S assembly. It makes multiple contacts with different domains of the 23S rRNA in the assembled 50S subunit and ribosome. Functionally, forms part of the polypeptide exit tunnel. The polypeptide is Large ribosomal subunit protein uL4 (Rickettsia typhi (strain ATCC VR-144 / Wilmington)).